A 555-amino-acid polypeptide reads, in one-letter code: Protein NRT1/ PTR FAMILY 5.12 (555 aa).

2 helical membrane passes run 53-73 (FAYF…LGES) and 83-103 (LWLG…DSFL). Position 108 is a phosphothreonine (T108). 10 helical membrane-spanning segments follow: residues 109-129 (ILLT…SATI), 148-168 (VIIF…FKVC), 190-210 (SYFN…RLVT), 221-241 (LGYA…LLGI), 315-335 (AVLS…VFAQ), 357-377 (VPAA…IPIY), 401-421 (ISTG…VEMK), 443-463 (VCWL…TMVG), 482-502 (ALYL…VSVI), and 526-546 (YFYW…VYFA).

Belongs to the major facilitator superfamily. Proton-dependent oligopeptide transporter (POT/PTR) (TC 2.A.17) family. Expressed in shoots and roots.

The protein localises to the membrane. The protein is Protein NRT1/ PTR FAMILY 5.12 (NPF5.12) of Arabidopsis thaliana (Mouse-ear cress).